We begin with the raw amino-acid sequence, 212 residues long: Large ribosomal subunit protein uL3 (212 aa).

The segment at 133–156 is disordered; the sequence is SMTHGSKNHRLPGSTGAGTTPGRV.

It belongs to the universal ribosomal protein uL3 family. As to quaternary structure, part of the 50S ribosomal subunit. Forms a cluster with proteins L14 and L19.

Its function is as follows. One of the primary rRNA binding proteins, it binds directly near the 3'-end of the 23S rRNA, where it nucleates assembly of the 50S subunit. The protein is Large ribosomal subunit protein uL3 of Crocosphaera subtropica (strain ATCC 51142 / BH68) (Cyanothece sp. (strain ATCC 51142)).